The chain runs to 247 residues: Lysosomal membrane ascorbate-dependent ferrireductase CYB561A3 (247 aa).

Over 1-3 (MRG) the chain is Cytoplasmic. Residues 4 to 24 (IVGFYITYLLCLILGIACVVL) form a helical membrane-spanning segment. The Cytochrome b561 domain occupies 13–223 (LCLILGIACV…FGLVVLKILS (211 aa)). Topologically, residues 25–46 (VVHWNFMYRDGFAWDGSSKNFN) are lumenal. A helical transmembrane segment spans residues 47–67 (WHPVLMVTGMLVLYGNAAVVY). Residues histidine 48 and arginine 68 each coordinate heme b. At 68-82 (RIPLTWGHNKLPWKL) the chain is on the cytoplasmic side. L-ascorbate contacts are provided by lysine 77 and lysine 81. The chain crosses the membrane as a helical span at residues 83–103 (LHAGLLLLSFIFSVIGLCAVF). Heme b-binding positions include histidine 84, 113–116 (NLYS), and histidine 118. Topologically, residues 104–120 (NFHNVHHTANLYSLHSW) are lumenal. A helical membrane pass occupies residues 121-141 (VGICTAALFTAQWVMGFTSFL). Over 142-155 (LPCTPMAVRAFVKP) the chain is Cytoplasmic. Position 150 (arginine 150) interacts with L-ascorbate. A helical membrane pass occupies residues 156–176 (THVWMGAMILVLSIVSCISGI). Heme b-binding residues include histidine 157 and glutamate 178. Over 177–201 (NEKLFFVLKETTNGTKPYSALPPEA) the chain is Lumenal. The N-linked (GlcNAc...) asparagine glycan is linked to asparagine 189. Residues 202–222 (VAANSLGVIIVAFGLVVLKIL) traverse the membrane as a helical segment. Residues 223 to 247 (SNQMWQRPEPGDDEGVYRPLAYDGS) are Cytoplasmic-facing. Glutamine 228 is a binding site for heme b.

In terms of assembly, homodimer. The cofactor is heme b.

Its subcellular location is the late endosome membrane. The protein resides in the lysosome membrane. The enzyme catalyses Fe(3+)(out) + L-ascorbate(in) = monodehydro-L-ascorbate radical(in) + Fe(2+)(out) + H(+). Functionally, transmembrane reductase that uses ascorbate as an electron donor in the cytoplasm and transfers electrons across membranes to reduce iron cations Fe(3+) into Fe(2+) in the lumen of the late endosome and lysosome. Reduced iron can then be extruded from the late endosome and lysosome to the cytoplasm by divalent metal-specific transporters. It is therefore most probably involved in endosomal and lysosomal cellular iron homeostasis. This is Lysosomal membrane ascorbate-dependent ferrireductase CYB561A3 (cyb561a3a) from Danio rerio (Zebrafish).